The chain runs to 72 residues: Translation initiation factor IF-1 (72 aa).

In terms of domain architecture, S1-like spans 1–72; sequence MAKEEPIEVE…TRGRIIYRTK (72 aa).

Belongs to the IF-1 family. Component of the 30S ribosomal translation pre-initiation complex which assembles on the 30S ribosome in the order IF-2 and IF-3, IF-1 and N-formylmethionyl-tRNA(fMet); mRNA recruitment can occur at any time during PIC assembly.

The protein localises to the cytoplasm. In terms of biological role, one of the essential components for the initiation of protein synthesis. Stabilizes the binding of IF-2 and IF-3 on the 30S subunit to which N-formylmethionyl-tRNA(fMet) subsequently binds. Helps modulate mRNA selection, yielding the 30S pre-initiation complex (PIC). Upon addition of the 50S ribosomal subunit IF-1, IF-2 and IF-3 are released leaving the mature 70S translation initiation complex. In Syntrophus aciditrophicus (strain SB), this protein is Translation initiation factor IF-1.